A 175-amino-acid chain; its full sequence is ATP-dependent protease subunit HslV (175 aa).

Thr2 is a catalytic residue. Residues Gly158, Cys161, and Thr164 each contribute to the Na(+) site.

It belongs to the peptidase T1B family. HslV subfamily. In terms of assembly, a double ring-shaped homohexamer of HslV is capped on each side by a ring-shaped HslU homohexamer. The assembly of the HslU/HslV complex is dependent on binding of ATP.

It is found in the cytoplasm. The catalysed reaction is ATP-dependent cleavage of peptide bonds with broad specificity.. Allosterically activated by HslU binding. Its function is as follows. Protease subunit of a proteasome-like degradation complex believed to be a general protein degrading machinery. The polypeptide is ATP-dependent protease subunit HslV (Haemophilus influenzae (strain PittGG)).